Reading from the N-terminus, the 351-residue chain is Ribosomal RNA large subunit methyltransferase M (351 aa).

S-adenosyl-L-methionine is bound by residues Ser-183, 216-219, Asp-235, Asp-255, and Asp-271; that span reads APGG. Lys-300 serves as the catalytic Proton acceptor.

This sequence belongs to the class I-like SAM-binding methyltransferase superfamily. RNA methyltransferase RlmE family. RlmM subfamily. Monomer.

The protein resides in the cytoplasm. The enzyme catalyses cytidine(2498) in 23S rRNA + S-adenosyl-L-methionine = 2'-O-methylcytidine(2498) in 23S rRNA + S-adenosyl-L-homocysteine + H(+). Catalyzes the 2'-O-methylation at nucleotide C2498 in 23S rRNA. This Ectopseudomonas mendocina (strain ymp) (Pseudomonas mendocina) protein is Ribosomal RNA large subunit methyltransferase M.